We begin with the raw amino-acid sequence, 155 residues long: Xanthine-guanine phosphoribosyltransferase (155 aa).

5-phospho-alpha-D-ribose 1-diphosphate-binding positions include 37–38 and 91–99; these read RG and DDLVDTGNT. Position 92 (Asp-92) interacts with Mg(2+). 2 residues coordinate guanine: Asp-95 and Ile-138. 2 residues coordinate xanthine: Asp-95 and Ile-138. GMP-binding positions include 95–99 and 137–138; these read DTGNT and WI.

The protein belongs to the purine/pyrimidine phosphoribosyltransferase family. XGPT subfamily. In terms of assembly, homotetramer. Requires Mg(2+) as cofactor.

The protein localises to the cell inner membrane. The enzyme catalyses GMP + diphosphate = guanine + 5-phospho-alpha-D-ribose 1-diphosphate. It catalyses the reaction XMP + diphosphate = xanthine + 5-phospho-alpha-D-ribose 1-diphosphate. The catalysed reaction is IMP + diphosphate = hypoxanthine + 5-phospho-alpha-D-ribose 1-diphosphate. The protein operates within purine metabolism; GMP biosynthesis via salvage pathway; GMP from guanine: step 1/1. It functions in the pathway purine metabolism; XMP biosynthesis via salvage pathway; XMP from xanthine: step 1/1. Its function is as follows. Acts on guanine, xanthine and to a lesser extent hypoxanthine. Purine salvage pathway enzyme that catalyzes the transfer of the ribosyl-5-phosphate group from 5-phospho-alpha-D-ribose 1-diphosphate (PRPP) to the N9 position of the 6-oxopurines guanine and xanthine to form the corresponding ribonucleotides GMP (guanosine 5'-monophosphate) and XMP (xanthosine 5'-monophosphate), with the release of PPi. To a lesser extent, also acts on hypoxanthine. The chain is Xanthine-guanine phosphoribosyltransferase from Haemophilus influenzae (strain ATCC 51907 / DSM 11121 / KW20 / Rd).